The following is a 145-amino-acid chain: D-aminoacyl-tRNA deacylase (145 aa).

Residues 137-138 (GP) carry the Gly-cisPro motif, important for rejection of L-amino acids motif.

Belongs to the DTD family. Homodimer.

It localises to the cytoplasm. It carries out the reaction glycyl-tRNA(Ala) + H2O = tRNA(Ala) + glycine + H(+). The enzyme catalyses a D-aminoacyl-tRNA + H2O = a tRNA + a D-alpha-amino acid + H(+). Functionally, an aminoacyl-tRNA editing enzyme that deacylates mischarged D-aminoacyl-tRNAs. Also deacylates mischarged glycyl-tRNA(Ala), protecting cells against glycine mischarging by AlaRS. Acts via tRNA-based rather than protein-based catalysis; rejects L-amino acids rather than detecting D-amino acids in the active site. By recycling D-aminoacyl-tRNA to D-amino acids and free tRNA molecules, this enzyme counteracts the toxicity associated with the formation of D-aminoacyl-tRNA entities in vivo and helps enforce protein L-homochirality. In Pseudomonas fluorescens (strain SBW25), this protein is D-aminoacyl-tRNA deacylase.